The following is a 1893-amino-acid chain: Nestin (1893 aa).

Met-1 is subject to N-acetylmethionine. Residues Met-1–Glu-7 are head. Positions Glu-8–Leu-43 are coil 1A. In terms of domain architecture, IF rod spans Glu-8–Leu-314. Residues Arg-44–Arg-55 form a linker 1 region. The coil 1B stretch occupies residues Ala-56–Leu-151. Residues His-150–Arg-172 are disordered. Residues Asn-152–Pro-174 form a linker 12 region. The coil 2A stretch occupies residues Glu-175–Asp-193. Residues Tyr-194–Glu-196 form a linker 2 region. The coil 2B stretch occupies residues Arg-197–Leu-314. Ser-312 bears the Phosphoserine mark. The tract at residues Gln-315–Asp-1893 is tail. Thr-316 is subject to Phosphothreonine. Residues Ser-356 and Ser-359 each carry the phosphoserine modification. Thr-389 bears the Phosphothreonine mark. 3 disordered regions span residues Pro-437–Arg-479, Asn-507–Pro-529, and Lys-556–Ser-879. Residues Asn-507 to Gly-517 show a composition bias toward polar residues. A Phosphoserine modification is found at Ser-562. 2 stretches are compositionally biased toward basic and acidic residues: residues Gly-572–Leu-595 and Leu-606–Asp-615. A Phosphoserine modification is found at Ser-620. Composition is skewed to basic and acidic residues over residues Glu-634–Asn-646 and Met-670–Ser-681. Phosphoserine is present on residues Ser-685 and Ser-729. Basic and acidic residues-rich tracts occupy residues Arg-717 to Pro-730, Arg-761 to Ala-774, Ile-802 to Pro-818, and Met-846 to Ser-879. Position 817 is a phosphoserine (Ser-817). Ser-903 bears the Phosphoserine mark. Composition is skewed to basic and acidic residues over residues Leu-949–Gly-966 and Gln-989–Glu-1051. The interval Leu-949 to Glu-1130 is disordered. Ser-1005 and Ser-1049 each carry phosphoserine. Lys-1136 participates in a covalent cross-link: Glycyl lysine isopeptide (Lys-Gly) (interchain with G-Cter in SUMO1); alternate. Lys-1136 is covalently cross-linked (Glycyl lysine isopeptide (Lys-Gly) (interchain with G-Cter in SUMO2); alternate). Residues Ser-1145 and Ser-1166 each carry the phosphoserine modification. The interval Glu-1155–Val-1222 is disordered. Over residues Asp-1198–Gln-1212 the composition is skewed to basic and acidic residues. Ser-1216 and Ser-1229 each carry phosphoserine. Residues Glu-1237 to Arg-1263 are disordered. The segment covering Glu-1241–Gln-1253 has biased composition (basic and acidic residues). Ser-1322 is subject to Phosphoserine. Disordered stretches follow at residues Asp-1336–Ser-1369 and Glu-1388–Val-1824. Composition is skewed to basic and acidic residues over residues Val-1354–Gln-1363 and Glu-1393–Ala-1403. Acidic residues-rich tracts occupy residues Glu-1458–Ser-1469 and Gln-1561–Gly-1576. Ser-1570, Ser-1594, Ser-1686, Ser-1695, Ser-1772, and Ser-1774 each carry phosphoserine. The span at Gly-1688 to Ala-1709 shows a compositional bias: acidic residues. The segment covering Gly-1773–Gln-1788 has biased composition (acidic residues). A compositionally biased stretch (polar residues) spans Gln-1815–Val-1824. A phosphoserine mark is found at Ser-1866, Ser-1889, and Ser-1890. Residues Leu-1870–Asp-1893 form a disordered region.

This sequence belongs to the intermediate filament family. As to quaternary structure, forms homodimers and homotetramers in vitro. In mixtures with other intermediate filament proteins such as vimentin and alpha-internexin, this protein preferentially forms heterodimers which can assemble to form intermediate filaments if nestin does not exceed 25%. Interacts with FHOD3. Post-translationally, constitutively phosphorylated. This increases during mitosis when the cytoplasmic intermediate filament network is reorganized. In terms of tissue distribution, CNS stem cells.

Required for brain and eye development. Promotes the disassembly of phosphorylated vimentin intermediate filaments (IF) during mitosis and may play a role in the trafficking and distribution of IF proteins and other cellular factors to daughter cells during progenitor cell division. Required for survival, renewal and mitogen-stimulated proliferation of neural progenitor cells. The chain is Nestin (Nes) from Rattus norvegicus (Rat).